We begin with the raw amino-acid sequence, 221 residues long: MALVVKDIVKNFGEGLSETKVLKGINFEVEQGEFVILNGASGSGKTTLLTILGGLLSQTSGTVLYNDAPLFDKQHRSSDLRLEDIGFIFQSSHLVPYLKVIEQLTLVGQEAGMTKQQSSKRAIQLLKNIGLEDRLNVYPHQLSGGEKQRVAIMRAFMNNPKIILADEPTASLDADRATKVVEMIRQQIKEQQMIGIMITHDRRLFEYADRVIELEDGKITD.

The ABC transporter domain maps to L3–D221. G39–T46 contributes to the ATP binding site.

This sequence belongs to the ABC transporter superfamily. HrtA family. In terms of assembly, the complex is composed of two ATP-binding proteins (HrtA), two transmembrane proteins (HrtB) and a solute-binding protein.

It localises to the cell membrane. Functionally, part of the ABC transporter complex hrt involved in hemin import. Responsible for energy coupling to the transport system. The polypeptide is Putative hemin import ATP-binding protein HrtA (hrtA) (Staphylococcus aureus (strain MRSA252)).